The following is a 666-amino-acid chain: Threonine--tRNA ligase (666 aa).

In terms of domain architecture, TGS spans methionine 1–arginine 64. Positions aspartate 245–proline 553 are catalytic. Zn(2+) contacts are provided by cysteine 347, histidine 398, and histidine 530.

It belongs to the class-II aminoacyl-tRNA synthetase family. As to quaternary structure, homodimer. Zn(2+) is required as a cofactor.

It is found in the cytoplasm. The catalysed reaction is tRNA(Thr) + L-threonine + ATP = L-threonyl-tRNA(Thr) + AMP + diphosphate + H(+). Catalyzes the attachment of threonine to tRNA(Thr) in a two-step reaction: L-threonine is first activated by ATP to form Thr-AMP and then transferred to the acceptor end of tRNA(Thr). Also edits incorrectly charged L-seryl-tRNA(Thr). This chain is Threonine--tRNA ligase, found in Allorhizobium ampelinum (strain ATCC BAA-846 / DSM 112012 / S4) (Agrobacterium vitis (strain S4)).